Reading from the N-terminus, the 312-residue chain is Malate dehydrogenase (312 aa).

NAD(+)-binding positions include 7 to 13 (GAAGGIG) and Asp-34. The substrate site is built by Arg-81 and Arg-87. NAD(+)-binding positions include Asn-94 and 117–119 (ITN). Positions 119 and 153 each coordinate substrate. His-177 (proton acceptor) is an active-site residue. Met-227 is a binding site for NAD(+).

Belongs to the LDH/MDH superfamily. MDH type 1 family. Homodimer.

The catalysed reaction is (S)-malate + NAD(+) = oxaloacetate + NADH + H(+). Catalyzes the reversible oxidation of malate to oxaloacetate. This chain is Malate dehydrogenase (mdh), found in Moritella sp. (strain 2D2).